A 239-amino-acid chain; its full sequence is Myogenic factor 6 (239 aa).

The tract at residues 28 to 64 (HLDMSGVSPLYNGNDSPLSPGQDNVPSETGGESSGDE) is disordered. Polar residues predominate over residues 38 to 58 (YNGNDSPLSPGQDNVPSETGG). Residues 96 to 147 (DRRKAATLRERRRLKKINEAFDALKRKTVANPNQRLPKVEILRSAISYIERL) form the bHLH domain. A disordered region spans residues 155–189 (DEQERSQSGASDTRNDKEQNRPSGGDYRWKKASNT).

In terms of assembly, efficient DNA binding requires dimerization with another bHLH protein.

It is found in the nucleus. Its function is as follows. Involved in muscle differentiation (myogenic factor). Induces fibroblasts to differentiate into myoblasts. Probable sequence specific DNA-binding protein. This chain is Myogenic factor 6 (myf6), found in Takifugu rubripes (Japanese pufferfish).